The following is a 35-amino-acid chain: Photosystem II reaction center protein M (35 aa).

The helical transmembrane segment at 7 to 27 threads the bilayer; it reads GLLATILVILVPSIFLVILYV.

It belongs to the PsbM family. In terms of assembly, PSII is composed of 1 copy each of membrane proteins PsbA, PsbB, PsbC, PsbD, PsbE, PsbF, PsbH, PsbI, PsbJ, PsbK, PsbL, PsbM, PsbT, PsbX, PsbY, PsbZ, Psb30/Ycf12, peripheral proteins PsbO, CyanoQ (PsbQ), PsbU, PsbV and a large number of cofactors. It forms dimeric complexes.

Its subcellular location is the cellular thylakoid membrane. Functionally, one of the components of the core complex of photosystem II (PSII). PSII is a light-driven water:plastoquinone oxidoreductase that uses light energy to abstract electrons from H(2)O, generating O(2) and a proton gradient subsequently used for ATP formation. It consists of a core antenna complex that captures photons, and an electron transfer chain that converts photonic excitation into a charge separation. This subunit is found at the monomer-monomer interface. This is Photosystem II reaction center protein M from Synechococcus sp. (strain JA-3-3Ab) (Cyanobacteria bacterium Yellowstone A-Prime).